The following is a 239-amino-acid chain: Aldehyde dehydrogenase, dimeric NADP-preferring (239 aa).

Cys30 is an active-site residue.

The protein belongs to the aldehyde dehydrogenase family. Homodimer.

The protein resides in the cytoplasm. It catalyses the reaction an aldehyde + NAD(+) + H2O = a carboxylate + NADH + 2 H(+). The catalysed reaction is octanal + NAD(+) + H2O = octanoate + NADH + 2 H(+). ALDHs play a major role in the detoxification of alcohol-derived acetaldehyde. They are involved in the metabolism of corticosteroids, biogenic amines, neurotransmitters, and lipid peroxidation. Oxidizes medium and long chain aldehydes into non-toxic fatty acids. Preferentially oxidizes aromatic aldehyde substrates. Comprises about 50 percent of corneal epithelial soluble proteins. May play a role in preventing corneal damage caused by ultraviolet light. The sequence is that of Aldehyde dehydrogenase, dimeric NADP-preferring (ALDH3A1) from Bos taurus (Bovine).